The chain runs to 755 residues: Polyribonucleotide nucleotidyltransferase (755 aa).

Residues aspartate 493 and aspartate 499 each coordinate Mg(2+). Positions 560-619 constitute a KH domain; that stretch reads PRIMTIQIPVDKIGALIGPGGKTIRNICETTGAQIDIEDDGRVFITTPDGAAARQAISMI. The S1 motif domain maps to 629–698; the sequence is GDIFLGKVVS…TTGKISLSRR (70 aa). The interval 699–755 is disordered; sequence AVLTGETPEERKAAGAAPRPRPREEQRGGRDEPRSLRDELRGPRREGDRPRPRRRDD. The span at 719–755 shows a compositional bias: basic and acidic residues; it reads RPREEQRGGRDEPRSLRDELRGPRREGDRPRPRRRDD.

Belongs to the polyribonucleotide nucleotidyltransferase family. Mg(2+) serves as cofactor.

The protein resides in the cytoplasm. The catalysed reaction is RNA(n+1) + phosphate = RNA(n) + a ribonucleoside 5'-diphosphate. Functionally, involved in mRNA degradation. Catalyzes the phosphorolysis of single-stranded polyribonucleotides processively in the 3'- to 5'-direction. The sequence is that of Polyribonucleotide nucleotidyltransferase from Chloroflexus aurantiacus (strain ATCC 29366 / DSM 635 / J-10-fl).